A 229-amino-acid chain; its full sequence is tRNA (guanine-N(7)-)-methyltransferase (229 aa).

The S-adenosyl-L-methionine site is built by Glu-62, Glu-87, Asp-114, and Asp-137. Asp-137 is an active-site residue. Lys-141 contacts substrate. An interaction with RNA region spans residues Lys-143 to Arg-148. Substrate is bound by residues Asp-173 and Thr-208–Glu-211.

The protein belongs to the class I-like SAM-binding methyltransferase superfamily. TrmB family.

It carries out the reaction guanosine(46) in tRNA + S-adenosyl-L-methionine = N(7)-methylguanosine(46) in tRNA + S-adenosyl-L-homocysteine. Its pathway is tRNA modification; N(7)-methylguanine-tRNA biosynthesis. Functionally, catalyzes the formation of N(7)-methylguanine at position 46 (m7G46) in tRNA. The protein is tRNA (guanine-N(7)-)-methyltransferase of Francisella philomiragia subsp. philomiragia (strain ATCC 25017 / CCUG 19701 / FSC 153 / O#319-036).